The following is a 566-amino-acid chain: Acyl-CoA synthetase ALT10 (566 aa).

196-207 (MLFTSGTTGAPK) provides a ligand contact to AMP. The segment at 473-551 (EVEHAALSHE…DAVHYNRTGK (79 aa)) is AMP-binding.

The protein belongs to the ATP-dependent AMP-binding enzyme family.

It participates in mycotoxin biosynthesis. Functionally, acyl-CoA synthetase; part of the gene cluster that mediates the biosynthesis of the host-selective toxins (HSTs) AAL-toxins, sphinganine-analog mycotoxins responsible for Alternaria stem canker on tomato by the tomato pathotype. The biosynthesis starts with the polyketide synthase ALT1-catalyzed C-16 carbon chain assembly from one starter acetyl-CoA unit with malonyl-CoA extender units. ALT1 also selectively transfers methyl groups at the first and the third cycle of chain elongation for AAL toxin. The C-16 polyketide chain is released from the enzyme by a nucleophilic attack of a carbanion, which is derived from R-carbon of glycin by decarboxylation, on the carbonyl carbon of polyketide acyl chain. This step is probably catalyzed by a pyridoxal 5'-phosphate-dependent aminoacyl transferase ALT4. The respective functions of the other enzymes encoded by the cluster have still to be elucidated. The sphingosine N-acyltransferase-like protein ALT7 seems not to act as a resistance/self-tolerance factor against the toxin in the toxin biosynthetic gene cluster, contrary to what is expected. This chain is Acyl-CoA synthetase ALT10, found in Alternaria alternata (Alternaria rot fungus).